Here is a 192-residue protein sequence, read N- to C-terminus: Pyridoxal 5'-phosphate synthase subunit PdxT (192 aa).

Position 53–55 (53–55 (GES)) interacts with L-glutamine. Cysteine 82 acts as the Nucleophile in catalysis. L-glutamine contacts are provided by residues arginine 109 and 137–138 (IR). Residues histidine 173 and glutamate 175 each act as charge relay system in the active site.

This sequence belongs to the glutaminase PdxT/SNO family. As to quaternary structure, in the presence of PdxS, forms a dodecamer of heterodimers. Only shows activity in the heterodimer.

It carries out the reaction aldehydo-D-ribose 5-phosphate + D-glyceraldehyde 3-phosphate + L-glutamine = pyridoxal 5'-phosphate + L-glutamate + phosphate + 3 H2O + H(+). It catalyses the reaction L-glutamine + H2O = L-glutamate + NH4(+). The protein operates within cofactor biosynthesis; pyridoxal 5'-phosphate biosynthesis. Functionally, catalyzes the hydrolysis of glutamine to glutamate and ammonia as part of the biosynthesis of pyridoxal 5'-phosphate. The resulting ammonia molecule is channeled to the active site of PdxS. The polypeptide is Pyridoxal 5'-phosphate synthase subunit PdxT (Methanoculleus marisnigri (strain ATCC 35101 / DSM 1498 / JR1)).